The primary structure comprises 216 residues: Somatotropin (216 aa).

An N-terminal signal peptide occupies residues 1–26 (MAAGPRTSMLLAFALLCLPWTQEVGA). His45 is a binding site for Zn(2+). Cys78 and Cys189 are disulfide-bonded. Ser131 carries the phosphoserine modification. Glu198 lines the Zn(2+) pocket. Cys206 and Cys214 are disulfide-bonded.

The protein belongs to the somatotropin/prolactin family.

Its subcellular location is the secreted. Its function is as follows. Plays an important role in growth control. Its major role in stimulating body growth is to stimulate the liver and other tissues to secrete IGF1. It stimulates both the differentiation and proliferation of myoblasts. It also stimulates amino acid uptake and protein synthesis in muscle and other tissues. This Balaenoptera physalus (Fin whale) protein is Somatotropin (GH1).